The chain runs to 352 residues: Probable cytosolic iron-sulfur protein assembly protein CIAO1 homolog (352 aa).

WD repeat units follow at residues 14-53 (GHDD…PSEQ), 63-102 (CHTR…WEQV), 107-146 (GHEN…EFEC), 152-191 (GHSQ…WGCA), 200-240 (GHES…TSTP), 268-306 (HHRR…LTQP), and 319-352 (AHGA…WWLR).

It belongs to the WD repeat CIA1 family.

Essential component of the cytosolic iron-sulfur (Fe/S) protein assembly machinery. Required for the maturation of extramitochondrial Fe/S proteins. The protein is Probable cytosolic iron-sulfur protein assembly protein CIAO1 homolog of Chlamydomonas reinhardtii (Chlamydomonas smithii).